Reading from the N-terminus, the 352-residue chain is 4-hydroxy-3-methylbut-2-en-1-yl diphosphate synthase (flavodoxin) (352 aa).

The [4Fe-4S] cluster site is built by Cys262, Cys265, Cys297, and Glu304.

This sequence belongs to the IspG family. Requires [4Fe-4S] cluster as cofactor.

It carries out the reaction (2E)-4-hydroxy-3-methylbut-2-enyl diphosphate + oxidized [flavodoxin] + H2O + 2 H(+) = 2-C-methyl-D-erythritol 2,4-cyclic diphosphate + reduced [flavodoxin]. Its pathway is isoprenoid biosynthesis; isopentenyl diphosphate biosynthesis via DXP pathway; isopentenyl diphosphate from 1-deoxy-D-xylulose 5-phosphate: step 5/6. Functionally, converts 2C-methyl-D-erythritol 2,4-cyclodiphosphate (ME-2,4cPP) into 1-hydroxy-2-methyl-2-(E)-butenyl 4-diphosphate. This Nitratiruptor sp. (strain SB155-2) protein is 4-hydroxy-3-methylbut-2-en-1-yl diphosphate synthase (flavodoxin).